Reading from the N-terminus, the 1186-residue chain is Probable inactive serine/threonine-protein kinase DDB_G0293184 (1186 aa).

Positions 1–12 (MEQEDQQYEEDS) are enriched in acidic residues. Disordered regions lie at residues 1 to 55 (MEQE…NNDS) and 99 to 122 (MEQQ…NTNF). Composition is skewed to low complexity over residues 34 to 48 (TTTE…TTPT) and 99 to 110 (MEQQQQQQHLQP). A Protein kinase domain is found at 173 to 437 (YESPPTLGKY…VHDLLRHPWL (265 aa)). ATP is bound by residues 179–187 (LGKYDKVIL) and lysine 205. Disordered stretches follow at residues 447–468 (SSSS…GNVN) and 530–551 (YNNY…NECG). The segment covering 453-468 (QAHPTVQSNNLNGNVN) has biased composition (polar residues). The span at 530–545 (YNNYNNNNNNNNNTND) shows a compositional bias: low complexity. Residues 631–659 (LKRTNQMANDLGRKYEILQSNIKRLEDYL) adopt a coiled-coil conformation. Residues 766 to 784 (NNLDPSNNNESVNLSTSPG) show a composition bias toward polar residues. 2 disordered regions span residues 766–911 (NNLD…NGNN) and 959–988 (ENKK…GDVS). Low complexity predominate over residues 785–836 (SLVNSNSNPSISNSLNNNNNNNNNNNNNNNGNPNVIITTNNNCNSNSNGNNI). The segment covering 847–896 (KEVKEGKEIKEIKEPKEKDKDKEKDKDKEKDKDKEKDKDKEKEKDKDKEN) has biased composition (basic and acidic residues). The stretch at 875–909 (EKDKDKEKDKDKEKEKDKDKENNNNNNSNNNNNNG) forms a coiled coil. A compositionally biased stretch (low complexity) spans 897 to 911 (NNNNNSNNNNNNGNN). The segment covering 969–978 (LDSTNKQSPG) has biased composition (polar residues). The Rho-GAP domain occupies 1004–1186 (VRLDDLMTRE…LSFPKFNLSV (183 aa)).

This sequence belongs to the protein kinase superfamily. STE Ser/Thr protein kinase family.

This Dictyostelium discoideum (Social amoeba) protein is Probable inactive serine/threonine-protein kinase DDB_G0293184.